The chain runs to 528 residues: UDP-glucuronosyltransferase 2A1 (528 aa).

Positions 1–21 are cleaved as a signal peptide; it reads MLKNILLCSLQISLLGMSLGG. Residues 22–494 are Extracellular-facing; the sequence is NVLIWPMEGS…FQYHSLDVIG (473 aa). Asn-49 is a glycosylation site (N-linked (GlcNAc...) asparagine). At Lys-135 the chain carries N6-succinyllysine. The N-linked (GlcNAc...) asparagine glycan is linked to Asn-314. A helical membrane pass occupies residues 495–515; the sequence is FLLACVASAILLVAKCCLFIF. The Cytoplasmic portion of the chain corresponds to 516–528; sequence QKVGKTGKKKKRD.

The protein belongs to the UDP-glycosyltransferase family.

It is found in the membrane. It catalyses the reaction glucuronate acceptor + UDP-alpha-D-glucuronate = acceptor beta-D-glucuronoside + UDP + H(+). The catalysed reaction is 16beta,17beta-estriol + UDP-alpha-D-glucuronate = 16beta,17beta-estriol 16-O-(beta-D-glucuronate) + UDP + H(+). The enzyme catalyses 16alpha,17alpha-estriol + UDP-alpha-D-glucuronate = 16alpha,17alpha-estriol 16-O-(beta-D-glucuronate) + UDP + H(+). It carries out the reaction 17alpha-estradiol + UDP-alpha-D-glucuronate = 17alpha-estradiol 17-O-(beta-D-glucuronate) + UDP + H(+). It catalyses the reaction 17alpha-estradiol + UDP-alpha-D-glucuronate = 17alpha-estradiol 3-O-(beta-D-glucuronate) + UDP + H(+). The catalysed reaction is 17beta-estradiol + UDP-alpha-D-glucuronate = 17beta-estradiol 3-O-(beta-D-glucuronate) + UDP + H(+). The enzyme catalyses 17beta-estradiol + UDP-alpha-D-glucuronate = 17beta-estradiol 17-O-(beta-D-glucuronate) + UDP + H(+). It carries out the reaction testosterone + UDP-alpha-D-glucuronate = testosterone 17-O-(beta-D-glucuronate) + UDP + H(+). It catalyses the reaction epitestosterone + UDP-alpha-D-glucuronate = epitestosterone 17-O-(beta-D-glucuronate) + UDP + H(+). The catalysed reaction is lithocholate + UDP-alpha-D-glucuronate = lithocholoyl-3-O-(beta-D-glucuronate) + UDP + H(+). The enzyme catalyses lithocholate + UDP-alpha-D-glucuronate = lithocholoyl-24-O-(beta-D-glucuronate) + UDP. It carries out the reaction deoxycholate + UDP-alpha-D-glucuronate = deoxycholoyl-24-O-(beta-D-glucuronate) + UDP. It catalyses the reaction hyodeoxycholate + UDP-alpha-D-glucuronate = hyodeoxycholate 6-O-(beta-D-glucuronate) + UDP + H(+). The catalysed reaction is hyocholate + UDP-alpha-D-glucuronate = hyocholoyl-24-O-(beta-D-glucuronate) + UDP. Functionally, UDP-glucuronosyltransferase (UGT) that catalyzes phase II biotransformation reactions in which lipophilic substrates are conjugated with glucuronic acid to increase the metabolite's water solubility, thereby facilitating excretion into either the urine or bile. Essential for the elimination and detoxification of drugs, xenobiotics and endogenous compounds. Catalyzes the glucuronidation of endogenous steroid hormones such as androgens (testosterones) and estrogens (estradiol and estriol). Contributes to bile acid (BA) detoxification by catalyzing the glucuronidation of BA substrates, which are natural detergents for dietary lipids absorption. Shows a high affinity to aliphatic odorants such as citronellol as well as olfactory tissue specificity, and therefore may be involved in olfaction. In Mus musculus (Mouse), this protein is UDP-glucuronosyltransferase 2A1.